The chain runs to 402 residues: Bacillibactin exporter (402 aa).

The next 11 helical transmembrane spans lie at 4–24, 39–59, 69–89, 104–124, 162–182, 212–232, 247–267, 278–298, 302–322, 342–362, and 368–388; these read IIAL…LIPV, VSLI…IAGY, ILLP…FAST, LQGI…GDLF, FVPF…VLFL, WLYT…GVLF, VAKG…SFIA, MKFC…ALWW, FYFL…ALPA, FYNS…AALM, and IIFI…LFTV.

Belongs to the major facilitator superfamily.

It localises to the cell membrane. In terms of biological role, involved in secretion of bacillibactin. The protein is Bacillibactin exporter (ymfD) of Bacillus subtilis (strain 168).